We begin with the raw amino-acid sequence, 195 residues long: Achaete-scute homolog 1b (195 aa).

The bHLH domain maps to 66 to 118 (MAVARRNERERNRVKQVNMGFQTLRQHVPNGAANKKMSKVETLRSAVEYIRAL). The interval 141–164 (VSNAYSAGPESPHSAYSSDEGSYE) is disordered.

In terms of assembly, efficient DNA binding requires dimerization with another bHLH protein. In the 24 hours embryo, expressed in hindbrain close to the anterior and posterior boundaries of rhombomeres 2-6 and in ventral cells close to the floor plate of most rhombomeres. Also expressed in the telencephalon, diencephalon, tegmentum and spinal cord at sites distinct from those expressing ascl1a. Not expressed in the adenohypophysis.

It localises to the nucleus. Functionally, transcriptional regulator. May mediate transcription activation by binding to the E box-containing promoter. Involved in neurogenesis. Involved in maintaining rhombomere boundaries in the hindbrain, probably via up-regulation of delta expression. May mediate transcription activation by binding to the E box-containing promoter. The sequence is that of Achaete-scute homolog 1b from Danio rerio (Zebrafish).